A 438-amino-acid chain; its full sequence is 3-phosphoshikimate 1-carboxyvinyltransferase (438 aa).

3-phosphoshikimate is bound by residues K21, S22, and R26. K21 serves as a coordination point for phosphoenolpyruvate. Phosphoenolpyruvate-binding residues include G95 and R123. Residues S167, Q169, D315, and K342 each contribute to the 3-phosphoshikimate site. Q169 serves as a coordination point for phosphoenolpyruvate. The active-site Proton acceptor is D315. 2 residues coordinate phosphoenolpyruvate: R346 and R387.

Belongs to the EPSP synthase family. Monomer.

Its subcellular location is the cytoplasm. It catalyses the reaction 3-phosphoshikimate + phosphoenolpyruvate = 5-O-(1-carboxyvinyl)-3-phosphoshikimate + phosphate. It participates in metabolic intermediate biosynthesis; chorismate biosynthesis; chorismate from D-erythrose 4-phosphate and phosphoenolpyruvate: step 6/7. Catalyzes the transfer of the enolpyruvyl moiety of phosphoenolpyruvate (PEP) to the 5-hydroxyl of shikimate-3-phosphate (S3P) to produce enolpyruvyl shikimate-3-phosphate and inorganic phosphate. In Coxiella burnetii (strain RSA 331 / Henzerling II), this protein is 3-phosphoshikimate 1-carboxyvinyltransferase.